The chain runs to 131 residues: Small ribosomal subunit protein bS6 (131 aa).

N6-acetyllysine is present on Lys-93. Residues 98–131 (EASPMVKAKDERRERRDDFANETADDAEAGDSEE) are disordered. The segment covering 104–116 (KAKDERRERRDDF) has biased composition (basic and acidic residues). Residues 120–131 (TADDAEAGDSEE) show a composition bias toward acidic residues.

It belongs to the bacterial ribosomal protein bS6 family.

Its function is as follows. Binds together with bS18 to 16S ribosomal RNA. The protein is Small ribosomal subunit protein bS6 of Escherichia fergusonii (strain ATCC 35469 / DSM 13698 / CCUG 18766 / IAM 14443 / JCM 21226 / LMG 7866 / NBRC 102419 / NCTC 12128 / CDC 0568-73).